We begin with the raw amino-acid sequence, 381 residues long: L-lactate dehydrogenase (381 aa).

The 380-residue stretch at 1–380 (MIISSASDYR…KPEALVDLSK (380 aa)) folds into the FMN hydroxy acid dehydrogenase domain. Y24 lines the substrate pocket. 2 residues coordinate FMN: S106 and Q127. Y129 is a substrate binding site. T155 lines the FMN pocket. R164 lines the substrate pocket. Residue K251 participates in FMN binding. Catalysis depends on H275, which acts as the Proton acceptor. R278 provides a ligand contact to substrate. 306–330 (DSGIRNGLDIVRMLALGADATMLGR) contributes to the FMN binding site.

This sequence belongs to the FMN-dependent alpha-hydroxy acid dehydrogenase family. It depends on FMN as a cofactor.

It localises to the cell inner membrane. It carries out the reaction (S)-lactate + A = pyruvate + AH2. Catalyzes the conversion of L-lactate to pyruvate. Is coupled to the respiratory chain. The sequence is that of L-lactate dehydrogenase from Haemophilus influenzae (strain PittEE).